The following is a 316-amino-acid chain: MAGFDPTLQPSDDRGHLLTEQSNPRSRRLDQLATNDLVNLFVEEDRRPQEAVAEASEAIAAAVDAISKRLSSGGRLFYLGAGTSGRLGVLDAAECPPTFCSDPELVQGVLAGGTPALLRSSEGLEDLEQAGRDDLDRHGFRQGDCLVGIAAGGTTPYVRGGLSYACSIGALAIAMACVPKDQAPLPCDIDIRLLTGPELLTGSTRLKAGTATKMALNILSTTVMVRLGKVYGNRMVDVAASNSKLVDRSLRILRDLIGVEREEGLALLALSDGSVKLALLMKAANLSKDQARSVLERHDQQLRPSLETCGATLAQL.

The segment at 1 to 23 is disordered; it reads MAGFDPTLQPSDDRGHLLTEQSN. The 164-residue stretch at 66 to 229 folds into the SIS domain; sequence ISKRLSSGGR…STTVMVRLGK (164 aa). The active-site Proton donor is the Glu94. Glu125 is a catalytic residue.

This sequence belongs to the GCKR-like family. MurNAc-6-P etherase subfamily. As to quaternary structure, homodimer.

The enzyme catalyses N-acetyl-D-muramate 6-phosphate + H2O = N-acetyl-D-glucosamine 6-phosphate + (R)-lactate. It participates in amino-sugar metabolism; N-acetylmuramate degradation. Specifically catalyzes the cleavage of the D-lactyl ether substituent of MurNAc 6-phosphate, producing GlcNAc 6-phosphate and D-lactate. The protein is N-acetylmuramic acid 6-phosphate etherase of Synechococcus sp. (strain CC9902).